The sequence spans 440 residues: tRNA-2-methylthio-N(6)-dimethylallyladenosine synthase (440 aa).

One can recognise an MTTase N-terminal domain in the interval 5–121 (KLLYLETFGC…LPELVRAAEK (117 aa)). [4Fe-4S] cluster is bound by residues Cys14, Cys50, Cys84, Cys159, Cys163, and Cys166. A Radical SAM core domain is found at 145–375 (RTDGVSRFVT…LDLQRRITLE (231 aa)). Residues 378 to 440 (KSFVGTVQQV…QNSLQGELCR (63 aa)) enclose the TRAM domain.

This sequence belongs to the methylthiotransferase family. MiaB subfamily. As to quaternary structure, monomer. [4Fe-4S] cluster serves as cofactor.

The protein localises to the cytoplasm. The catalysed reaction is N(6)-dimethylallyladenosine(37) in tRNA + (sulfur carrier)-SH + AH2 + 2 S-adenosyl-L-methionine = 2-methylsulfanyl-N(6)-dimethylallyladenosine(37) in tRNA + (sulfur carrier)-H + 5'-deoxyadenosine + L-methionine + A + S-adenosyl-L-homocysteine + 2 H(+). In terms of biological role, catalyzes the methylthiolation of N6-(dimethylallyl)adenosine (i(6)A), leading to the formation of 2-methylthio-N6-(dimethylallyl)adenosine (ms(2)i(6)A) at position 37 in tRNAs that read codons beginning with uridine. This chain is tRNA-2-methylthio-N(6)-dimethylallyladenosine synthase, found in Geotalea uraniireducens (strain Rf4) (Geobacter uraniireducens).